A 218-amino-acid polypeptide reads, in one-letter code: LOB domain-containing protein 29 (218 aa).

An LOB domain is found at 10 to 112 (SPCGACKFLR…AELEILKQQA (103 aa)).

It belongs to the LOB domain-containing protein family. Expressed in roots.

In terms of biological role, involved in lateral root formation. Regulated by the transcriptional activators ARF7 and ARF19. The protein is LOB domain-containing protein 29 (LBD29) of Arabidopsis thaliana (Mouse-ear cress).